The chain runs to 381 residues: Succinyl-diaminopimelate desuccinylase (381 aa).

Histidine 72 contributes to the Zn(2+) binding site. Aspartate 74 is a catalytic residue. Aspartate 105 lines the Zn(2+) pocket. Glutamate 139 acts as the Proton acceptor in catalysis. The Zn(2+) site is built by glutamate 140, glutamate 168, and histidine 354.

It belongs to the peptidase M20A family. DapE subfamily. Homodimer. The cofactor is Zn(2+). Co(2+) serves as cofactor.

It carries out the reaction N-succinyl-(2S,6S)-2,6-diaminopimelate + H2O = (2S,6S)-2,6-diaminopimelate + succinate. It participates in amino-acid biosynthesis; L-lysine biosynthesis via DAP pathway; LL-2,6-diaminopimelate from (S)-tetrahydrodipicolinate (succinylase route): step 3/3. Its function is as follows. Catalyzes the hydrolysis of N-succinyl-L,L-diaminopimelic acid (SDAP), forming succinate and LL-2,6-diaminopimelate (DAP), an intermediate involved in the bacterial biosynthesis of lysine and meso-diaminopimelic acid, an essential component of bacterial cell walls. This Shewanella sp. (strain ANA-3) protein is Succinyl-diaminopimelate desuccinylase.